The following is a 303-amino-acid chain: E3 ubiquitin-protein ligase SINA-like 3 (303 aa).

Positions 1-30 are disordered; sequence MENITNNSERSLDRPKRQRPVSMENVGGTA. Residues 49–85 form an RING-type zinc finger; the sequence is CPICYHKLGAPIYQCDNGHIACSSCCKKVKYKCPYCS. Residues 99 to 286 form an SBD region; that stretch reads IVEAVVVSCP…MSIPYYLLDE (188 aa). Residues 102 to 162 form an SIAH-type zinc finger; it reads AVVVSCPNAK…LYRHYHAEHK (61 aa). 8 residues coordinate Zn(2+): Cys107, Cys114, His128, Cys132, Cys139, Cys144, His156, and His161.

It belongs to the SINA (Seven in absentia) family.

It carries out the reaction S-ubiquitinyl-[E2 ubiquitin-conjugating enzyme]-L-cysteine + [acceptor protein]-L-lysine = [E2 ubiquitin-conjugating enzyme]-L-cysteine + N(6)-ubiquitinyl-[acceptor protein]-L-lysine.. Its pathway is protein modification; protein ubiquitination. In terms of biological role, E3 ubiquitin-protein ligase that mediates ubiquitination and subsequent proteasomal degradation of target proteins. E3 ubiquitin ligases accept ubiquitin from an E2 ubiquitin-conjugating enzyme in the form of a thioester and then directly transfers the ubiquitin to targeted substrates. It probably triggers the ubiquitin-mediated degradation of different substrates. The protein is E3 ubiquitin-protein ligase SINA-like 3 of Arabidopsis thaliana (Mouse-ear cress).